Reading from the N-terminus, the 264-residue chain is 3-methyl-2-oxobutanoate hydroxymethyltransferase (264 aa).

Mg(2+) is bound by residues Asp45 and Asp84. Residues 45–46, Asp84, and Lys112 each bind 3-methyl-2-oxobutanoate; that span reads DS. Residue Glu114 coordinates Mg(2+). The active-site Proton acceptor is the Glu181.

Belongs to the PanB family. As to quaternary structure, homodecamer; pentamer of dimers. It depends on Mg(2+) as a cofactor.

The protein resides in the cytoplasm. The enzyme catalyses 3-methyl-2-oxobutanoate + (6R)-5,10-methylene-5,6,7,8-tetrahydrofolate + H2O = 2-dehydropantoate + (6S)-5,6,7,8-tetrahydrofolate. Its pathway is cofactor biosynthesis; (R)-pantothenate biosynthesis; (R)-pantoate from 3-methyl-2-oxobutanoate: step 1/2. Functionally, catalyzes the reversible reaction in which hydroxymethyl group from 5,10-methylenetetrahydrofolate is transferred onto alpha-ketoisovalerate to form ketopantoate. The polypeptide is 3-methyl-2-oxobutanoate hydroxymethyltransferase (Pseudoalteromonas translucida (strain TAC 125)).